A 123-amino-acid chain; its full sequence is MPTIQQLIRSKRQLVKSRTKSPALQGCPQRRGVCTRVYTTTPKKPNSALRKVARVKLTSGFEITAYIPGIGHNLQEHSVVLVRGGRVKDLPGVRYHIVRGTLDTVGVKDRKQGRSKYGVKKPK.

It belongs to the universal ribosomal protein uS12 family. In terms of assembly, part of the 30S ribosomal subunit.

It localises to the plastid. Its subcellular location is the chloroplast. In terms of biological role, with S4 and S5 plays an important role in translational accuracy. Located at the interface of the 30S and 50S subunits. The protein is Small ribosomal subunit protein uS12c (rps12) of Anthoceros angustus (Hornwort).